We begin with the raw amino-acid sequence, 276 residues long: Undecaprenyl-diphosphatase (276 aa).

5 helical membrane passes run 84–104, 115–135, 188–208, 222–242, and 250–270; these read YRLG…GLFF, LWVV…AEYV, FGFL…LPDA, QLLV…AWLL, and MYWF…LLAT.

The protein belongs to the UppP family.

It is found in the cell membrane. It catalyses the reaction di-trans,octa-cis-undecaprenyl diphosphate + H2O = di-trans,octa-cis-undecaprenyl phosphate + phosphate + H(+). In terms of biological role, catalyzes the dephosphorylation of undecaprenyl diphosphate (UPP). Confers resistance to bacitracin. This Mycobacterium bovis (strain ATCC BAA-935 / AF2122/97) protein is Undecaprenyl-diphosphatase.